A 1437-amino-acid polypeptide reads, in one-letter code: uncharacterized protein (1437 aa).

The first 25 residues, 1 to 25, serve as a signal peptide directing secretion; that stretch reads MRRGCRHHLAAVVLLIATFPPLAYN. Over 26-1326 the chain is Extracellular; the sequence is QNIGGINQNI…SRIKENYFKW (1301 aa). N-linked (GlcNAc...) asparagine glycosylation is found at Asn-103, Asn-315, Asn-364, Asn-492, Asn-605, Asn-676, and Asn-914. The 164-residue stretch at 193–356 folds into the NIDO domain; it reads AFFGQQASQA…GRYMFRVDDV (164 aa). An AMOP domain is found at 648–829; the sequence is VKEKSREMCH…FRCQMFYWRR (182 aa). Residues 1327–1347 form a helical membrane-spanning segment; that stretch reads LAVIAGIVGIIIVILLIFLVF. Residues 1348–1437 lie on the Cytoplasmic side of the membrane; sequence WCIKRKKLQE…QGMLGLNTSV (90 aa). The tract at residues 1394–1419 is disordered; that stretch reads PRTVAMPPPRGTTATPMTLEPRGFSP.

The protein localises to the membrane. This is an uncharacterized protein from Caenorhabditis elegans.